Here is a 388-residue protein sequence, read N- to C-terminus: MMLLKKGRLLMFLGSQVIVVALFIHMSVHRHLSQREESRRPVHVLVLSSWRSGSSFVGQLFGQHPDVFYLMEPAWHVWMTFTSSTAWKLHMAVRDLLRSVFLCDMSVFDAYMNPGPRKQSSLFQWEQSRALCSAPVCDFFPAHEISSPKHCKLLCGQQPFDMVEKACRSHGFVVLKEVRFLSLQALYPLLTDPSLNLHVVHLVRDPRAVFRSREHTTIELVVDSHIVLGQHLETIKEEDQPYYAMKIICKSQVDIVKAIQTLPEALQQRYLFLRYEDLVRAPLAQTTRLYKFVGLDFLPHLQTWVHNVTRGKGMGQHAFHTNARNALNVSQAWRWSLPYEKVSQLQDACGEAMDLLGYLQVRSQQEQGNLSLDLLSSSHILGQVFREG.

The Cytoplasmic segment spans residues 1-7; it reads MMLLKKG. A helical; Signal-anchor for type II membrane protein membrane pass occupies residues 8–28; it reads RLLMFLGSQVIVVALFIHMSV. The Lumenal segment spans residues 29–388; that stretch reads HRHLSQREES…HILGQVFREG (360 aa). 3'-phosphoadenylyl sulfate contacts are provided by residues 50-56 and 204-212; these read WRSGSSF and RDPRAVFRS. Residues Asn-307, Asn-328, and Asn-369 are each glycosylated (N-linked (GlcNAc...) asparagine).

This sequence belongs to the sulfotransferase 1 family. Gal/GlcNAc/GalNAc subfamily. In terms of assembly, monomer. Specifically expressed in high endothelial venules (HEV) of peripheral lymph nodes.

The protein localises to the golgi apparatus membrane. It carries out the reaction 3-O-{N-acetyl-beta-D-glucosaminyl-(1-&gt;3)-beta-D-galactosyl-(1-&gt;3)-N-acetyl-alpha-D-galactosaminyl}-L-threonyl-[protein] + 3'-phosphoadenylyl sulfate = 3-O-{6-O-sulfo-N-acetyl-beta-D-glucosaminyl-(1-&gt;3)-beta-D-galactosyl-(1-&gt;3)-N-acetyl-alpha-D-galactosaminyl}-L-threonyl-[protein] + adenosine 3',5'-bisphosphate + H(+). The enzyme catalyses 3-O-{N-acetyl-beta-D-glucosaminyl-(1-&gt;3)-beta-D-galactosyl-(1-&gt;3)-N-acetyl-alpha-D-galactosaminyl}-L-seryl-[protein] + 3'-phosphoadenylyl sulfate = 3-O-{6-O-sulfo-N-acetyl-beta-D-glucosaminyl-(1-&gt;3)-beta-D-galactosyl-(1-&gt;3)-N-acetyl-alpha-D-galactosaminyl}-L-seryl-[protein] + adenosine 3',5'-bisphosphate + H(+). The catalysed reaction is a 3-O-{beta-D-galactosyl-(1-&gt;3)-[N-acetyl-beta-D-glucosaminyl-(1-&gt;6)]-N-acetyl-alpha-D-galactosaminyl}-L-threonyl-[protein] + 3'-phosphoadenylyl sulfate = 3-O-{beta-D-galactosyl-(1-&gt;3)-[6-O-sulfo-N-acetyl-beta-D-glucosaminyl-(1-&gt;6)]-N-acetyl-alpha-D-galactosaminyl}-L-threonyl-[protein] + adenosine 3',5'-bisphosphate + H(+). It catalyses the reaction 3-O-{beta-D-galactosyl-(1-&gt;3)-[N-acetyl-beta-D-glucosaminyl-(1-&gt;6)]-N-acetyl-alpha-D-galactosaminyl}-L-seryl-[protein] + 3'-phosphoadenylyl sulfate = 3-O-{beta-D-galactosyl-(1-&gt;3)-[6-O-sulfo-N-acetyl-beta-D-glucosaminyl-(1-&gt;6)]-N-acetyl-alpha-D-galactosaminyl}-L-seryl-[protein] + adenosine 3',5'-bisphosphate + H(+). Its pathway is protein modification; carbohydrate sulfation. Functionally, sulfotransferase involved in SELL/L-selectin ligand biosynthesis pathway. Catalyzes the transfer of the sulfate group from 3'-phospho-5'-adenylyl sulfate (PAPS) onto the hydroxyl group at C-6 position of the non-reducing N-acetylglucosamine (GlcNAc) residue within O-linked mucin-type glycans. Contributes to generate sialyl 6-sulfo Lewis X determinant (also known as MECA-79 epitope) for SELL recognition, a prerequisite for continuous lymphocyte homing into peripheral lymph nodes and antigen immune surveillance. Transfers the sulfate group primarily on core 2 GlcNAcbeta1-6(Galbeta1-3)GalNAcalphaSer/Thr and extended core 1 GlcNAcbeta1-3Galbeta1-3GalNAcalphaSer/Thr based O-linked glycans on CD34 and GLYCAM1 peripheral node addressins (PNAds) expressed on the lumenal side of high endothelial venules (HEVs). The recognition of PNAds by SELL initiates a multistep process comprising tethering and rolling of blood lymphocytes on HEVs against the blood flow, followed by chemokine signaling, integrin-mediated lymphocyte adhesion onto endothelial cells and lymphocyte transendothelial migration. Modulates rolling velocity and differential T and B lymphocyte recruitment into peripheral lymph nodes, with a major role in B lymphocyte homing. Might be redundant in sulfation of MADCAM1 and lymphocyte trafficking to mesenteric lymph nodes. Can also sulfonate core 3 GlcNAcbeta1-3GalNAc-R based glycans as well as GlcNAcbeta1-3Galbeta1-Glc, GlcNAcbeta1-6ManOMe and GlcNAcbeta1-2Man oligosaccharides, which might be ectopically expressed during tumorigenesis. The sequence is that of Carbohydrate sulfotransferase 4 (Chst4) from Mus musculus (Mouse).